A 391-amino-acid chain; its full sequence is Probable tRNA sulfurtransferase (391 aa).

One can recognise a THUMP domain in the interval 60-167; the sequence is DETVAALQRV…NKAYVYSNTL (108 aa). ATP contacts are provided by residues 184-185, 209-210, Arg266, Gly288, and Gln297; these read LL and YF.

The protein belongs to the ThiI family.

The protein localises to the cytoplasm. It carries out the reaction [ThiI sulfur-carrier protein]-S-sulfanyl-L-cysteine + a uridine in tRNA + 2 reduced [2Fe-2S]-[ferredoxin] + ATP + H(+) = [ThiI sulfur-carrier protein]-L-cysteine + a 4-thiouridine in tRNA + 2 oxidized [2Fe-2S]-[ferredoxin] + AMP + diphosphate. It catalyses the reaction [ThiS sulfur-carrier protein]-C-terminal Gly-Gly-AMP + S-sulfanyl-L-cysteinyl-[cysteine desulfurase] + AH2 = [ThiS sulfur-carrier protein]-C-terminal-Gly-aminoethanethioate + L-cysteinyl-[cysteine desulfurase] + A + AMP + 2 H(+). The protein operates within cofactor biosynthesis; thiamine diphosphate biosynthesis. Its function is as follows. Catalyzes the ATP-dependent transfer of a sulfur to tRNA to produce 4-thiouridine in position 8 of tRNAs, which functions as a near-UV photosensor. Also catalyzes the transfer of sulfur to the sulfur carrier protein ThiS, forming ThiS-thiocarboxylate. This is a step in the synthesis of thiazole, in the thiamine biosynthesis pathway. The sulfur is donated as persulfide by IscS. This chain is Probable tRNA sulfurtransferase, found in Lachnoclostridium phytofermentans (strain ATCC 700394 / DSM 18823 / ISDg) (Clostridium phytofermentans).